The primary structure comprises 185 residues: Large ribosomal subunit protein uL5 (185 aa).

It belongs to the universal ribosomal protein uL5 family. As to quaternary structure, part of the 50S ribosomal subunit; part of the 5S rRNA/L5/L18/L25 subcomplex. Contacts the 5S rRNA and the P site tRNA. Forms a bridge to the 30S subunit in the 70S ribosome.

This is one of the proteins that bind and probably mediate the attachment of the 5S RNA into the large ribosomal subunit, where it forms part of the central protuberance. In the 70S ribosome it contacts protein S13 of the 30S subunit (bridge B1b), connecting the 2 subunits; this bridge is implicated in subunit movement. Contacts the P site tRNA; the 5S rRNA and some of its associated proteins might help stabilize positioning of ribosome-bound tRNAs. In Magnetococcus marinus (strain ATCC BAA-1437 / JCM 17883 / MC-1), this protein is Large ribosomal subunit protein uL5.